The sequence spans 323 residues: Calcium homeostasis modulator protein 2 (323 aa).

Over 1 to 21 (MAALIAENFRFLSLFFKSKDV) the chain is Cytoplasmic. The tract at residues 14 to 39 (LFFKSKDVMIFNGLVALGTVGSQELF) is central pore. Residues 22–43 (MIFNGLVALGTVGSQELFSVVA) form a helical membrane-spanning segment. Residues 44-52 (FHCPCSPAR) lie on the Extracellular side of the membrane. Disulfide bonds link Cys46–Cys130 and Cys48–Cys162. A helical membrane pass occupies residues 53-76 (NYLYGLTAIGVPALALFLIGVILN). At 77-101 (NHTWNLVAECQYRRAKNCSAAPTFL) the chain is on the cytoplasmic side. A helical membrane pass occupies residues 102-132 (LLSSILGRAAVAPVTWSVISLLRGEAYVCAL). Topologically, residues 133–179 (SEFVDPSSLTAGDEGFPPDHATEILARFPCGEGPANLSGFREEVSRR) are extracellular. Positions 145–152 (DEGFPPDH) are hemichannel docking. A helical transmembrane segment spans residues 180–206 (LKYESQLFGWLLIGVVAILVFLTKCFK). Residues 207 to 323 (HYCSPLSYRQ…DNVEMALLTV (117 aa)) are Cytoplasmic-facing. The tract at residues 214–251 (YRQEAYWAQYRTNEDQLFQRTAEVHSRVLAANNVRRFF) is intersubunit interaction.

The protein belongs to the CALHM family. As to quaternary structure, homo-undecamer. Two undecameric hemichannels can assemble in a head-to-head manner to form a gap junction.

It is found in the cell membrane. The enzyme catalyses ATP(in) = ATP(out). In terms of biological role, pore-forming subunit of Ca(2+) homeostasis modulator channels. Mediates ATP release from astrocytes and ATP-induced Ca(2+) influx in microglia thus regulating neuronal ATP and Ca(2+) homeostasis, synaptic transmission and neuroinflammatory response. May form intercellular gap junctions. The gating mechanism remains unknown. This chain is Calcium homeostasis modulator protein 2 (Calhm2), found in Rattus norvegicus (Rat).